Consider the following 197-residue polypeptide: RNA-binding protein with multiple splicing (197 aa).

An N-acetylmethionine modification is found at M1. A Phosphothreonine modification is found at T12. The 78-residue stretch at 24–101 (RTLFVSGLPL…QTLRLEFAKA (78 aa)) folds into the RRM domain. The segment at 98 to 105 (FAKANTKM) is interaction with RNA. The residue at position 113 (T113) is a Phosphothreonine.

As to quaternary structure, homodimer; each protein chain binds one RNA molecule via the external surface of the homodimer. Interacts with RNA binding proteins MBNL1, RBFOX2, RBM4 and RBM14; the interaction allows cooperative assembly of stable cell-specific alternative splicing regulatory complexes. Also interacts with RBM47, MATR3 and ESRP2. Interacts with SMAD2, SMAD3 and SMAD4; the interactions are direct. As to expression, mRNA expressed in developing heart, with significantly higher expression in the atria relative to the ventricles.

The protein localises to the nucleus. It is found in the cytoplasm. It localises to the stress granule. The protein resides in the P-body. In terms of biological role, RNA binding protein that mediates the regulation of pre-mRNA alternative splicing (AS). Acts either as activator (FLNB, HSPG2, LIPA1, MYOCD, PTPRF and PPFIBP1) or repressor (TPM1, ACTN1, ITGA7, PIEZO1, LSM14B, MBNL1 and MBML2) of splicing events on specific pre-mRNA targets. Together with RNA binding proteins RBFOX2 and MBNL1/2, activates a splicing program associated with differentiated contractile vascular smooth muscle cells (SMC) by regulating AS of numerous pre-mRNA involved in actin cytoskeleton and focal adhesion machineries, suggesting a role in promoting a cell differentiated state. Binds to introns, exons and 3'-UTR associated with tandem CAC trinucleotide motifs separated by a variable spacer region, at a minimum as a dimer. The minimal length of RNA required for RBPMS-binding tandem CAC motifs is 15 nt, with spacing ranging from 1 to 9 nt. Can also bind to CA dinucleotide repeats. Mediates repression of TPM1 exon 3 by binding to CAC tandem repeats in the flanking intronic regions, followed by higher-order oligomerization and heterotypic interactions with other splicing regulators including MBNL1 and RBFOX2, which prevents assembly of ATP-dependent splicing complexes. The chain is RNA-binding protein with multiple splicing from Mus musculus (Mouse).